The primary structure comprises 487 residues: Protein DETOXIFICATION 11 (487 aa).

A run of 12 helical transmembrane segments spans residues 35–55 (LICFAAPMAAVVITQSMLQII), 73–93 (FAISFCNVTGFSFIMGLSCAL), 122–142 (LVCLPLSLLWFNMGKLLVILG), 151–171 (AGRFAAWLIPGLFAYAVLQPL), 184–204 (LLITSCVVFCLHVPLCWLLVY), 211–231 (IGGALALSLSYWLYAIFLGSF), 264–284 (AAMLCLEWWSYELIILLSGLL), 293–313 (VLSVCLQTLSMTYSIPLAIAA), 330–350 (AAHIVVYAAMSLAVVDALMVG), 377–397 (MAPLVSISLILDSLQGVLSGV), 412–432 (FGAFYLWGIPIAASLAFWVHL), and 435–455 (VGLWIGIIAGAVLQTLLLALV).

It belongs to the multi antimicrobial extrusion (MATE) (TC 2.A.66.1) family.

Its subcellular location is the membrane. The protein is Protein DETOXIFICATION 11 of Arabidopsis thaliana (Mouse-ear cress).